Here is a 146-residue protein sequence, read N- to C-terminus: Ribosome maturation factor RimP (146 aa).

The protein belongs to the RimP family.

The protein resides in the cytoplasm. In terms of biological role, required for maturation of 30S ribosomal subunits. This chain is Ribosome maturation factor RimP, found in Helicobacter pylori (strain Shi470).